The chain runs to 636 residues: Threonine--tRNA ligase (636 aa).

In terms of domain architecture, TGS spans 1–59 (MPIITLPDGTKKIFEQVVSVEQVAKSMGLVKAALAGEVDGELVSTSFLIKTDANLTIIT). A catalytic region spans residues 240-531 (DHRKIGKTQD…LIEHYEGAYP (292 aa)). 3 residues coordinate Zn(2+): C331, H382, and H508.

Belongs to the class-II aminoacyl-tRNA synthetase family. As to quaternary structure, homodimer. Requires Zn(2+) as cofactor.

The protein resides in the cytoplasm. The catalysed reaction is tRNA(Thr) + L-threonine + ATP = L-threonyl-tRNA(Thr) + AMP + diphosphate + H(+). In terms of biological role, catalyzes the attachment of threonine to tRNA(Thr) in a two-step reaction: L-threonine is first activated by ATP to form Thr-AMP and then transferred to the acceptor end of tRNA(Thr). Also edits incorrectly charged L-seryl-tRNA(Thr). The polypeptide is Threonine--tRNA ligase (Vesicomyosocius okutanii subsp. Calyptogena okutanii (strain HA)).